A 304-amino-acid polypeptide reads, in one-letter code: Nod factor export ATP-binding protein I (304 aa).

The region spanning 6–236 is the ABC transporter domain; the sequence is IDFQQVEKRY…EIGCDVIEIY (231 aa). 38–45 lines the ATP pocket; it reads GPNGAGKT.

Belongs to the ABC transporter superfamily. Lipooligosaccharide exporter (TC 3.A.1.102) family. The complex is composed of two ATP-binding proteins (NodI) and two transmembrane proteins (NodJ).

It is found in the cell inner membrane. Functionally, part of the ABC transporter complex NodIJ involved in the export of the nodulation factors (Nod factors), the bacterial signal molecules that induce symbiosis and subsequent nodulation induction. Nod factors are LCO (lipo-chitin oligosaccharide), a modified beta-1,4-linked N-acetylglucosamine oligosaccharide. This subunit is responsible for energy coupling to the transport system. The protein is Nod factor export ATP-binding protein I of Burkholderia pseudomallei (strain K96243).